Consider the following 449-residue polypeptide: MLSVAILAAGKGTRMESSLPKVLHKISGKSLLQRVIDSCAELKPDKIFVITGHKSKEVQKSIPKDKKIHVVVQEPQSGTGHAIQVLCSEVKKHEGKLLVLNGDVPLIRPTTLKRLLYLHDSKNADVSLITTKKTNPHGYGRVFLNGDFIERIVEEKDCNELERENPLINAGVYCFNWGNLSEIINTLQSNNNQKEIYLTDTISLLKNSLSLEVEDNGELQGINNRIHLSECEECIQNSIKEKHMLNGVTFINKASCSISEEAEIGKDVIIEANTHIRGNTKINSHCIIGPNTFIENSNVGLQCEISNSTVYDSQVMDHIKIGPYSHIRPNSKISSYSKIGNFVEIKNSQLEEETKVNHLSYIGDSIIGRSTNIGAGTITANFDGQKKYQTKIGKNSSIGANTVFVAPINLGESVTTGAGSVITKDSKDNSLAISRTKQVNIENWKKKKS.

Positions 1 to 225 are pyrophosphorylase; sequence MLSVAILAAG…NGELQGINNR (225 aa). Residues 7–10, Lys21, Gln73, and 78–79 each bind UDP-N-acetyl-alpha-D-glucosamine; these read LAAG and GT. Asp103 provides a ligand contact to Mg(2+). UDP-N-acetyl-alpha-D-glucosamine is bound by residues Gly140, Glu154, Asn169, and Asn223. Residue Asn223 participates in Mg(2+) binding. The linker stretch occupies residues 226–246; it reads IHLSECEECIQNSIKEKHMLN. An N-acetyltransferase region spans residues 247-449; that stretch reads GVTFINKASC…NIENWKKKKS (203 aa). Arg328 and Lys346 together coordinate UDP-N-acetyl-alpha-D-glucosamine. The active-site Proton acceptor is His358. UDP-N-acetyl-alpha-D-glucosamine-binding residues include Tyr361 and Asn372. The acetyl-CoA site is built by Ala375, Ala418, and Arg435.

It in the N-terminal section; belongs to the N-acetylglucosamine-1-phosphate uridyltransferase family. The protein in the C-terminal section; belongs to the transferase hexapeptide repeat family. Homotrimer. Mg(2+) is required as a cofactor.

The protein localises to the cytoplasm. It catalyses the reaction alpha-D-glucosamine 1-phosphate + acetyl-CoA = N-acetyl-alpha-D-glucosamine 1-phosphate + CoA + H(+). It carries out the reaction N-acetyl-alpha-D-glucosamine 1-phosphate + UTP + H(+) = UDP-N-acetyl-alpha-D-glucosamine + diphosphate. It functions in the pathway nucleotide-sugar biosynthesis; UDP-N-acetyl-alpha-D-glucosamine biosynthesis; N-acetyl-alpha-D-glucosamine 1-phosphate from alpha-D-glucosamine 6-phosphate (route II): step 2/2. It participates in nucleotide-sugar biosynthesis; UDP-N-acetyl-alpha-D-glucosamine biosynthesis; UDP-N-acetyl-alpha-D-glucosamine from N-acetyl-alpha-D-glucosamine 1-phosphate: step 1/1. Its pathway is bacterial outer membrane biogenesis; LPS lipid A biosynthesis. Functionally, catalyzes the last two sequential reactions in the de novo biosynthetic pathway for UDP-N-acetylglucosamine (UDP-GlcNAc). The C-terminal domain catalyzes the transfer of acetyl group from acetyl coenzyme A to glucosamine-1-phosphate (GlcN-1-P) to produce N-acetylglucosamine-1-phosphate (GlcNAc-1-P), which is converted into UDP-GlcNAc by the transfer of uridine 5-monophosphate (from uridine 5-triphosphate), a reaction catalyzed by the N-terminal domain. This chain is Bifunctional protein GlmU, found in Prochlorococcus marinus (strain AS9601).